Consider the following 340-residue polypeptide: DNA-directed RNA polymerase subunit alpha (340 aa).

The alpha N-terminal domain (alpha-NTD) stretch occupies residues 1–238; sequence MVDPIVTKNW…EQLSIFINFD (238 aa). Residues 255-340 form an alpha C-terminal domain (alpha-CTD) region; it reads LNENLFRSVD…AAPQGGAPKV (86 aa).

This sequence belongs to the RNA polymerase alpha chain family. In terms of assembly, homodimer. The RNAP catalytic core consists of 2 alpha, 1 beta, 1 beta' and 1 omega subunit. When a sigma factor is associated with the core the holoenzyme is formed, which can initiate transcription.

It catalyses the reaction RNA(n) + a ribonucleoside 5'-triphosphate = RNA(n+1) + diphosphate. DNA-dependent RNA polymerase catalyzes the transcription of DNA into RNA using the four ribonucleoside triphosphates as substrates. The sequence is that of DNA-directed RNA polymerase subunit alpha from Anaeromyxobacter dehalogenans (strain 2CP-1 / ATCC BAA-258).